Here is a 496-residue protein sequence, read N- to C-terminus: Membrane-bound lytic murein transglycosylase F (496 aa).

A signal peptide spans 1–31 (MPIFSTRVLTYLRCIFRLFIGLTLLLTLVGC). Residues 32 to 271 (DFYTPSSQLE…KLDEKYFGHV (240 aa)) form a non-LT domain region. Positions 273–496 (NFDFVDTRTF…AEVVKQITLR (224 aa)) are LT domain. Residue E316 is part of the active site. The tract at residues 464–486 (HRREELDDDDSSEPPSAERPTVI) is disordered.

This sequence in the N-terminal section; belongs to the bacterial solute-binding protein 3 family. It in the C-terminal section; belongs to the transglycosylase Slt family.

It localises to the cell outer membrane. The enzyme catalyses Exolytic cleavage of the (1-&gt;4)-beta-glycosidic linkage between N-acetylmuramic acid (MurNAc) and N-acetylglucosamine (GlcNAc) residues in peptidoglycan, from either the reducing or the non-reducing ends of the peptidoglycan chains, with concomitant formation of a 1,6-anhydrobond in the MurNAc residue.. Functionally, murein-degrading enzyme that degrades murein glycan strands and insoluble, high-molecular weight murein sacculi, with the concomitant formation of a 1,6-anhydromuramoyl product. Lytic transglycosylases (LTs) play an integral role in the metabolism of the peptidoglycan (PG) sacculus. Their lytic action creates space within the PG sacculus to allow for its expansion as well as for the insertion of various structures such as secretion systems and flagella. In Aeromonas hydrophila subsp. hydrophila (strain ATCC 7966 / DSM 30187 / BCRC 13018 / CCUG 14551 / JCM 1027 / KCTC 2358 / NCIMB 9240 / NCTC 8049), this protein is Membrane-bound lytic murein transglycosylase F.